Here is a 345-residue protein sequence, read N- to C-terminus: Phosphoribosylformylglycinamidine cyclo-ligase (345 aa).

The protein belongs to the AIR synthase family.

The protein resides in the cytoplasm. It carries out the reaction 2-formamido-N(1)-(5-O-phospho-beta-D-ribosyl)acetamidine + ATP = 5-amino-1-(5-phospho-beta-D-ribosyl)imidazole + ADP + phosphate + H(+). Its pathway is purine metabolism; IMP biosynthesis via de novo pathway; 5-amino-1-(5-phospho-D-ribosyl)imidazole from N(2)-formyl-N(1)-(5-phospho-D-ribosyl)glycinamide: step 2/2. The protein is Phosphoribosylformylglycinamidine cyclo-ligase of Shewanella sediminis (strain HAW-EB3).